A 568-amino-acid polypeptide reads, in one-letter code: Natural resistance-associated macrophage protein 2 (568 aa).

Residues 1–20 (MVLDPKEKMPDDGASGDHGD) show a composition bias toward basic and acidic residues. The interval 1–45 (MVLDPKEKMPDDGASGDHGDSASLGAINPAYSNSSLPHSTGDSEE) is disordered. At 1 to 69 (MVLDPKEKMP…EEYSCFSFRK (69 aa)) the chain is on the cytoplasmic side. The span at 30-40 (AYSNSSLPHST) shows a compositional bias: polar residues. The helical transmembrane segment at 70–90 (LWAFTGPGFLMSIAYLDPGNI) threads the bilayer. Topologically, residues 91-95 (ESDLQ) are extracellular. A helical membrane pass occupies residues 96-117 (SGAVAGFKLLWVLLLATIVGLL). Residues 118–154 (LQRLAARLGVVTGLHLAEVCHRQYPKVPRIILWLMVE) lie on the Cytoplasmic side of the membrane. The chain crosses the membrane as a helical span at residues 155 to 175 (LAIIGSDMQEVIGSAIAINLL). Over 176–179 (SAGR) the chain is Extracellular. The chain crosses the membrane as a helical span at residues 180–194 (VPLWGGVLITIADTF). The Cytoplasmic segment spans residues 195–208 (VFLFLDKYGLRKLE). A helical membrane pass occupies residues 209 to 229 (AFFGFLITIMALTFGYEYITV). Over 230–255 (KPSQSQVLRGMFVPSCPGCRTPQVEQ) the chain is Extracellular. The chain crosses the membrane as a helical span at residues 256 to 276 (AVGIVGAVIMPHNMYLHSALV). Topologically, residues 277-301 (KSRQVNRANKQEVREANKYFFIESC) are cytoplasmic. The helical transmembrane segment at 302–322 (IALFVSFIINVFVVSVFAEAF) threads the bilayer. Residues 323-360 (FEKTNKQVVEVCKNNSSPHADLFPSDNSTLAVDIYKGG) lie on the Extracellular side of the membrane. Residues asparagine 336 and asparagine 349 are each glycosylated (N-linked (GlcNAc...) asparagine). The helical transmembrane segment at 361–381 (VVLGCYFGPAALYIWAVGILA) threads the bilayer. Residues 382 to 408 (AGQSSTMTGTYSGQFVMEGFLNLKWSR) lie on the Cytoplasmic side of the membrane. The helical transmembrane segment at 409 to 429 (FARVILTRSIAIIPTLLVAVF) threads the bilayer. Topologically, residues 430 to 440 (QDVEHLTGMND) are extracellular. The chain crosses the membrane as a helical span at residues 441–461 (FLNVLQSLQLPFALIPILTFT). The Cytoplasmic segment spans residues 462–482 (SLRPVMSEFSNGIGWRIAGGI). The helical transmembrane segment at 483–503 (LVLIVCSINMYFVVVYVQELG) threads the bilayer. At 504-506 (HVA) the chain is on the extracellular side. Residues 507–527 (LYVVAAVVSVAYLTFVFYLGW) form a helical membrane-spanning segment. Topologically, residues 528–568 (QCLIALGLSFLDCGRSYRLGLTAQPELYLLNTVDADSVVSR) are cytoplasmic. The required for early endosome targeting stretch occupies residues 555–559 (YLLNT). Residues leucine 556, serine 564, and serine 567 each carry the phosphoserine modification.

Belongs to the NRAMP family. As to quaternary structure, forms a complex with NDFIP1 and NEDD4L, in cortical neurons, in response to iron and cobalt exposure; this interaction leads to SLC11A2 ubiquitination by NEDD4L and proteasome-dependent degradation. Interacts with NDFIP1, NDFIP2 and WWP2; this interaction leads to SLC11A2 ubiquitination by WWP2 and subsequent proteasome-dependent degradation. Interacts with COX2 and TOM6 at the outer mitochondrion membrane. Interacts with ARRDC1; this interaction regulates the incorporation of SLC11A2 into extracellular vesicles through an ubiquitination-dependent mechanism. Interacts with ARRDC4; controls the incorporation of SLC11A2 into extracellular vesicles through an ubiquitination-dependent mechanism. Post-translationally, ubiquitinated by WWP2. In terms of processing, N-glycosylated. Abundantly expressed in erythroid precursor cells (at protein level). As to expression, expressed in duodenum (at protein level).

Its subcellular location is the golgi apparatus. It localises to the trans-Golgi network membrane. The protein resides in the early endosome membrane. The protein localises to the recycling endosome membrane. It is found in the cell membrane. Its subcellular location is the late endosome membrane. It localises to the lysosome membrane. The protein resides in the apical cell membrane. The protein localises to the mitochondrion outer membrane. It is found in the extracellular vesicle membrane. The catalysed reaction is Fe(2+)(in) + H(+)(in) = Fe(2+)(out) + H(+)(out). The enzyme catalyses Co(2+)(out) + H(+)(out) = Co(2+)(in) + H(+)(in). It carries out the reaction Cd(2+)(out) + H(+)(out) = Cd(2+)(in) + H(+)(in). It catalyses the reaction Mn(2+)(in) + H(+)(in) = Mn(2+)(out) + H(+)(out). The catalysed reaction is Zn(2+)(out) + H(+)(out) = Zn(2+)(in) + H(+)(in). The enzyme catalyses Ni(2+)(out) + H(+)(out) = Ni(2+)(in) + H(+)(in). It carries out the reaction H(+)(in) = H(+)(out). It catalyses the reaction Fe(2+)(in) = Fe(2+)(out). Functionally, proton-coupled metal ion symporter operating with a proton to metal ion stoichiometry of 1:1. Selectively transports various divalent metal cations, in decreasing affinity: Cd(2+) &gt; Fe(2+) &gt; Co(2+), Mn(2+) &gt;&gt; Zn(2+), Ni(2+), VO(2+). Essential for maintenance of iron homeostasis by modulating intestinal absorption of dietary Fe(2+) and TF-associated endosomal Fe(2+) transport in erythroid precursors and other cells. Enables Fe(2+) and Mn(2+) ion entry into mitochondria, and is thus expected to promote mitochondrial heme synthesis, iron-sulfur cluster biogenesis and antioxidant defense. Can mediate uncoupled fluxes of either protons or metal ions. This Mus musculus (Mouse) protein is Natural resistance-associated macrophage protein 2 (Slc11a2).